A 341-amino-acid polypeptide reads, in one-letter code: General L-amino acid-binding periplasmic protein AapJ (341 aa).

Residues 1 to 23 form the signal peptide; that stretch reads MKNKLLSAAIGAAVLAVGASAAS.

It belongs to the bacterial solute-binding protein 3 family. As to quaternary structure, the complex is composed of two ATP-binding proteins (AapP), two transmembrane proteins (AapM and AapQ) and a solute-binding protein (AapJ).

Its subcellular location is the periplasm. In terms of biological role, part of the ABC transporter complex AapJQMP involved in uptake of L-amino acids. Affects the efflux of these amino acids as well. Essential for the development of bacteroids, the differentiated legume-symbiotic forms of this bacterium, and for the effective N(2) fixation by them. The polypeptide is General L-amino acid-binding periplasmic protein AapJ (aapJ) (Rhizobium johnstonii (strain DSM 114642 / LMG 32736 / 3841) (Rhizobium leguminosarum bv. viciae)).